Here is a 144-residue protein sequence, read N- to C-terminus: MPGVSVRDVAAQDFINAYASFLQRQGKLEVPGYVDIVKTSSGNEMPPQDAEGWFYKRAASVARHIYMRKQVGVGKLNKLYGGAKSRGVRPYKHIDASGSINRKVLQALEKIGIVEISPKGGRRISENGQRDLDRIAAQTLEEDE.

It belongs to the eukaryotic ribosomal protein eS19 family. In terms of assembly, component of the small ribosomal subunit (SSU). Mature yeast ribosomes consist of a small (40S) and a large (60S) subunit. The 40S small subunit contains 1 molecule of ribosomal RNA (18S rRNA) and 33 different proteins (encoded by 57 genes). The large 60S subunit contains 3 rRNA molecules (25S, 5.8S and 5S rRNA) and 46 different proteins (encoded by 81 genes).

It localises to the cytoplasm. Functionally, component of the ribosome, a large ribonucleoprotein complex responsible for the synthesis of proteins in the cell. The small ribosomal subunit (SSU) binds messenger RNAs (mRNAs) and translates the encoded message by selecting cognate aminoacyl-transfer RNA (tRNA) molecules. The large subunit (LSU) contains the ribosomal catalytic site termed the peptidyl transferase center (PTC), which catalyzes the formation of peptide bonds, thereby polymerizing the amino acids delivered by tRNAs into a polypeptide chain. The nascent polypeptides leave the ribosome through a tunnel in the LSU and interact with protein factors that function in enzymatic processing, targeting, and the membrane insertion of nascent chains at the exit of the ribosomal tunnel. eS19 is required for proper maturation of the small (40S) ribosomal subunit. Binds to 40S pre-ribosomal particles, probably required after association of NOC4 but before association of ENP1, TSR1 and RIO2 with 20/21S pre-rRNA. The chain is Small ribosomal subunit protein eS19A from Saccharomyces cerevisiae (strain ATCC 204508 / S288c) (Baker's yeast).